The following is a 266-amino-acid chain: Energy-coupling factor transporter transmembrane protein EcfT 1 (266 aa).

Helical transmembrane passes span 33 to 53 (IGIL…LFTL), 73 to 93 (LIWL…GGTI), 107 to 127 (LLNG…STVI), 152 to 172 (VPVN…PTLM), and 243 to 263 (HFGD…LVIL).

This sequence belongs to the energy-coupling factor EcfT family. As to quaternary structure, forms a stable energy-coupling factor (ECF) transporter complex composed of 2 membrane-embedded substrate-binding proteins (S component), 2 ATP-binding proteins (A component) and 2 transmembrane proteins (T component). May be able to interact with more than 1 S component at a time.

The protein localises to the cell membrane. Transmembrane (T) component of an energy-coupling factor (ECF) ABC-transporter complex. Unlike classic ABC transporters this ECF transporter provides the energy necessary to transport a number of different substrates. The chain is Energy-coupling factor transporter transmembrane protein EcfT 1 from Listeria monocytogenes serotype 1/2a (strain 08-5578).